A 147-amino-acid chain; its full sequence is Small ribosomal subunit protein uS5 (147 aa).

One can recognise an S5 DRBM domain in the interval 9–72 (FEEVIVDIGR…DDAFKNIVEV (64 aa)).

It belongs to the universal ribosomal protein uS5 family. As to quaternary structure, part of the 30S ribosomal subunit. Contacts proteins S4 and S8.

In terms of biological role, with S4 and S12 plays an important role in translational accuracy. Functionally, located at the back of the 30S subunit body where it stabilizes the conformation of the head with respect to the body. The polypeptide is Small ribosomal subunit protein uS5 (Campylobacter jejuni subsp. jejuni serotype O:6 (strain 81116 / NCTC 11828)).